We begin with the raw amino-acid sequence, 409 residues long: Proteasome-activating nucleotidase (409 aa).

The disordered stretch occupies residues 1–22 (MTLSSAGGSRSHRHNGGHSERD). The stretch at 23-58 (VEIRILKDKVRSLTKEKISLQKELEYYKNEITKLLS) forms a coiled coil. ATP contacts are provided by residues 183–188 (GTGKTL) and H322.

This sequence belongs to the AAA ATPase family. In terms of assembly, homohexamer. The hexameric complex has a two-ring architecture resembling a top hat that caps the 20S proteasome core at one or both ends. Upon ATP-binding, the C-terminus of PAN interacts with the alpha-rings of the proteasome core by binding to the intersubunit pockets.

Its subcellular location is the cytoplasm. Its function is as follows. ATPase which is responsible for recognizing, binding, unfolding and translocation of substrate proteins into the archaeal 20S proteasome core particle. Is essential for opening the gate of the 20S proteasome via an interaction with its C-terminus, thereby allowing substrate entry and access to the site of proteolysis. Thus, the C-termini of the proteasomal ATPase function like a 'key in a lock' to induce gate opening and therefore regulate proteolysis. Unfolding activity requires energy from ATP hydrolysis, whereas ATP binding alone promotes ATPase-20S proteasome association which triggers gate opening, and supports translocation of unfolded substrates. This is Proteasome-activating nucleotidase from Aeropyrum pernix (strain ATCC 700893 / DSM 11879 / JCM 9820 / NBRC 100138 / K1).